Reading from the N-terminus, the 348-residue chain is Mannonate dehydratase (348 aa).

Belongs to the mannonate dehydratase family. Fe(2+) serves as cofactor. It depends on Mn(2+) as a cofactor.

It catalyses the reaction D-mannonate = 2-dehydro-3-deoxy-D-gluconate + H2O. It functions in the pathway carbohydrate metabolism; pentose and glucuronate interconversion. In terms of biological role, catalyzes the dehydration of D-mannonate. The sequence is that of Mannonate dehydratase from Streptococcus agalactiae serotype Ia (strain ATCC 27591 / A909 / CDC SS700).